We begin with the raw amino-acid sequence, 478 residues long: Adenosylhomocysteinase (478 aa).

3 residues coordinate substrate: T67, D144, and E204. NAD(+) is bound at residue 205 to 207 (TTT). Substrate is bound by residues K234 and D238. NAD(+)-binding positions include N239, 268 to 273 (GYGDVG), E291, N326, 347 to 349 (IGH), and N392.

Belongs to the adenosylhomocysteinase family. It depends on NAD(+) as a cofactor.

The protein resides in the cytoplasm. The enzyme catalyses S-adenosyl-L-homocysteine + H2O = L-homocysteine + adenosine. Its pathway is amino-acid biosynthesis; L-homocysteine biosynthesis; L-homocysteine from S-adenosyl-L-homocysteine: step 1/1. Its function is as follows. May play a key role in the regulation of the intracellular concentration of adenosylhomocysteine. The chain is Adenosylhomocysteinase from Nitrosomonas eutropha (strain DSM 101675 / C91 / Nm57).